Consider the following 465-residue polypeptide: Probable Xaa-Pro aminopeptidase PEPP (465 aa).

Residues aspartate 259, aspartate 270, glutamate 395, and glutamate 435 each coordinate Mn(2+).

Belongs to the peptidase M24B family. It depends on Mn(2+) as a cofactor.

It catalyses the reaction Release of any N-terminal amino acid, including proline, that is linked to proline, even from a dipeptide or tripeptide.. Catalyzes the removal of a penultimate prolyl residue from the N-termini of peptides. The polypeptide is Probable Xaa-Pro aminopeptidase PEPP (PEPP) (Pyricularia oryzae (strain 70-15 / ATCC MYA-4617 / FGSC 8958) (Rice blast fungus)).